Reading from the N-terminus, the 232-residue chain is Phosphatidylserine decarboxylase proenzyme (232 aa).

The Schiff-base intermediate with substrate; via pyruvic acid role is filled by serine 190. At serine 190 the chain carries Pyruvic acid (Ser); by autocatalysis.

The protein belongs to the phosphatidylserine decarboxylase family. PSD-A subfamily. Heterodimer of a large membrane-associated beta subunit and a small pyruvoyl-containing alpha subunit. Requires pyruvate as cofactor. Post-translationally, is synthesized initially as an inactive proenzyme. Formation of the active enzyme involves a self-maturation process in which the active site pyruvoyl group is generated from an internal serine residue via an autocatalytic post-translational modification. Two non-identical subunits are generated from the proenzyme in this reaction, and the pyruvate is formed at the N-terminus of the alpha chain, which is derived from the carboxyl end of the proenzyme. The post-translation cleavage follows an unusual pathway, termed non-hydrolytic serinolysis, in which the side chain hydroxyl group of the serine supplies its oxygen atom to form the C-terminus of the beta chain, while the remainder of the serine residue undergoes an oxidative deamination to produce ammonia and the pyruvoyl prosthetic group on the alpha chain.

It localises to the cell membrane. It carries out the reaction a 1,2-diacyl-sn-glycero-3-phospho-L-serine + H(+) = a 1,2-diacyl-sn-glycero-3-phosphoethanolamine + CO2. The protein operates within phospholipid metabolism; phosphatidylethanolamine biosynthesis; phosphatidylethanolamine from CDP-diacylglycerol: step 2/2. In terms of biological role, catalyzes the formation of phosphatidylethanolamine (PtdEtn) from phosphatidylserine (PtdSer). This chain is Phosphatidylserine decarboxylase proenzyme, found in Rhizobium etli (strain CIAT 652).